A 79-amino-acid chain; its full sequence is MPKRILQGVVVGDKNEKTVVVRVERRFAHPLLQKTVRRSKKYKAHDENNQYKIGDTVSIEECAPISKDKRWTVIAAQGK.

It belongs to the universal ribosomal protein uS17 family. Part of the 30S ribosomal subunit.

One of the primary rRNA binding proteins, it binds specifically to the 5'-end of 16S ribosomal RNA. The polypeptide is Small ribosomal subunit protein uS17 (Rhizobium etli (strain CIAT 652)).